A 267-amino-acid polypeptide reads, in one-letter code: 4-hydroxy-tetrahydrodipicolinate reductase (267 aa).

NAD(+) is bound by residues 8-13 (GAAGRM) and Asp34. Arg35 contributes to the NADP(+) binding site. Residues 98 to 100 (GTT) and 122 to 125 (AANF) each bind NAD(+). His155 acts as the Proton donor/acceptor in catalysis. His156 contributes to the (S)-2,3,4,5-tetrahydrodipicolinate binding site. Lys159 (proton donor) is an active-site residue. Position 165-166 (165-166 (GT)) interacts with (S)-2,3,4,5-tetrahydrodipicolinate.

This sequence belongs to the DapB family.

The protein localises to the cytoplasm. It catalyses the reaction (S)-2,3,4,5-tetrahydrodipicolinate + NAD(+) + H2O = (2S,4S)-4-hydroxy-2,3,4,5-tetrahydrodipicolinate + NADH + H(+). It carries out the reaction (S)-2,3,4,5-tetrahydrodipicolinate + NADP(+) + H2O = (2S,4S)-4-hydroxy-2,3,4,5-tetrahydrodipicolinate + NADPH + H(+). The protein operates within amino-acid biosynthesis; L-lysine biosynthesis via DAP pathway; (S)-tetrahydrodipicolinate from L-aspartate: step 4/4. Catalyzes the conversion of 4-hydroxy-tetrahydrodipicolinate (HTPA) to tetrahydrodipicolinate. The protein is 4-hydroxy-tetrahydrodipicolinate reductase of Pseudomonas amygdali pv. tabaci (Pseudomonas syringae pv. tabaci).